The primary structure comprises 299 residues: Phosphoribosylaminoimidazole-succinocarboxamide synthase (299 aa).

This sequence belongs to the SAICAR synthetase family.

The enzyme catalyses 5-amino-1-(5-phospho-D-ribosyl)imidazole-4-carboxylate + L-aspartate + ATP = (2S)-2-[5-amino-1-(5-phospho-beta-D-ribosyl)imidazole-4-carboxamido]succinate + ADP + phosphate + 2 H(+). Its pathway is purine metabolism; IMP biosynthesis via de novo pathway; 5-amino-1-(5-phospho-D-ribosyl)imidazole-4-carboxamide from 5-amino-1-(5-phospho-D-ribosyl)imidazole-4-carboxylate: step 1/2. The chain is Phosphoribosylaminoimidazole-succinocarboxamide synthase from Streptomyces coelicolor (strain ATCC BAA-471 / A3(2) / M145).